The chain runs to 318 residues: 5'-3' exonuclease (318 aa).

The region spanning 194-278 (AYAELALLRG…ATDAPVTLST (85 aa)) is the 5'-3' exonuclease domain.

5'-3' exonuclease acting preferentially on double-stranded DNA. In Mycobacterium tuberculosis (strain ATCC 25618 / H37Rv), this protein is 5'-3' exonuclease.